A 457-amino-acid chain; its full sequence is Argininosuccinate lyase (457 aa).

This sequence belongs to the lyase 1 family. Argininosuccinate lyase subfamily.

It localises to the cytoplasm. The enzyme catalyses 2-(N(omega)-L-arginino)succinate = fumarate + L-arginine. It participates in amino-acid biosynthesis; L-arginine biosynthesis; L-arginine from L-ornithine and carbamoyl phosphate: step 3/3. This is Argininosuccinate lyase from Escherichia coli O9:H4 (strain HS).